The primary structure comprises 171 residues: CS1 fimbrial subunit A (171 aa).

The first 23 residues, methionine 1 to alanine 23, serve as a signal peptide directing secretion.

This sequence belongs to the fimbrial CS1 protein family.

The protein resides in the fimbrium. Fimbriae (also called pili), polar filaments radiating from the surface of the bacterium to a length of 0.5-1.5 micrometers and numbering 100-300 per cell, enable bacteria to colonize the epithelium of specific host organs. The polypeptide is CS1 fimbrial subunit A (csoA) (Escherichia coli).